Reading from the N-terminus, the 155-residue chain is Small ribosomal subunit protein uS7c (155 aa).

It belongs to the universal ribosomal protein uS7 family. Part of the 30S ribosomal subunit.

The protein localises to the plastid. The protein resides in the chloroplast. In terms of biological role, one of the primary rRNA binding proteins, it binds directly to 16S rRNA where it nucleates assembly of the head domain of the 30S subunit. This chain is Small ribosomal subunit protein uS7c (rps7), found in Sagittaria latifolia (Broadleaf arrowhead).